The sequence spans 262 residues: Putative hydro-lyase Mflv_5194 (262 aa).

Belongs to the D-glutamate cyclase family.

In Mycolicibacterium gilvum (strain PYR-GCK) (Mycobacterium gilvum (strain PYR-GCK)), this protein is Putative hydro-lyase Mflv_5194.